The primary structure comprises 72 residues: DNA gyrase inhibitor YacG (72 aa).

Positions 14, 17, 33, and 37 each coordinate Zn(2+).

This sequence belongs to the DNA gyrase inhibitor YacG family. As to quaternary structure, interacts with GyrB. Zn(2+) serves as cofactor.

In terms of biological role, inhibits all the catalytic activities of DNA gyrase by preventing its interaction with DNA. Acts by binding directly to the C-terminal domain of GyrB, which probably disrupts DNA binding by the gyrase. The chain is DNA gyrase inhibitor YacG from Mannheimia succiniciproducens (strain KCTC 0769BP / MBEL55E).